Reading from the N-terminus, the 843-residue chain is Protein P (843 aa).

The segment at 1-177 (MPLSYQHFRK…FCGSPYSWEQ (177 aa)) is terminal protein domain (TP). Positions 178-346 (ELQHGRLVFQ…YCLSHLINLH (169 aa)) are spacer. Disordered stretches follow at residues 218 to 243 (LKQS…SGSI) and 291 to 315 (TAQR…AGSQ). Positions 347–690 (EDWGPCIEHG…YLNLYPVARQ (344 aa)) are polymerase/reverse transcriptase domain (RT). The Reverse transcriptase domain maps to 357–600 (EHNIRIPRTP…YSLNFMGYVI (244 aa)). Positions 429, 551, and 552 each coordinate Mg(2+).

Belongs to the hepadnaviridae P protein family.

The enzyme catalyses DNA(n) + a 2'-deoxyribonucleoside 5'-triphosphate = DNA(n+1) + diphosphate. It catalyses the reaction Endonucleolytic cleavage to 5'-phosphomonoester.. With respect to regulation, activated by host HSP70 and HSP40 in vitro to be able to bind the epsilon loop of the pgRNA. Because deletion of the RNase H region renders the protein partly chaperone-independent, the chaperones may be needed indirectly to relieve occlusion of the RNA-binding site by this domain. Inhibited by several reverse-transcriptase inhibitors: Lamivudine, Adefovir and Entecavir. Functionally, multifunctional enzyme that converts the viral RNA genome into dsDNA in viral cytoplasmic capsids. This enzyme displays a DNA polymerase activity that can copy either DNA or RNA templates, and a ribonuclease H (RNase H) activity that cleaves the RNA strand of RNA-DNA heteroduplexes in a partially processive 3'- to 5'-endonucleasic mode. Neo-synthesized pregenomic RNA (pgRNA) are encapsidated together with the P protein, and reverse-transcribed inside the nucleocapsid. Initiation of reverse-transcription occurs first by binding the epsilon loop on the pgRNA genome, and is initiated by protein priming, thereby the 5'-end of (-)DNA is covalently linked to P protein. Partial (+)DNA is synthesized from the (-)DNA template and generates the relaxed circular DNA (RC-DNA) genome. After budding and infection, the RC-DNA migrates in the nucleus, and is converted into a plasmid-like covalently closed circular DNA (cccDNA). The activity of P protein does not seem to be necessary for cccDNA generation, and is presumably released from (+)DNA by host nuclear DNA repair machinery. The chain is Protein P from Hepatitis B virus genotype C subtype ayw (isolate Australia/AustRC/1992) (HBV-C).